The chain runs to 101 residues: Large ribosomal subunit protein bL21 (101 aa).

The protein belongs to the bacterial ribosomal protein bL21 family. As to quaternary structure, part of the 50S ribosomal subunit. Contacts protein L20.

This protein binds to 23S rRNA in the presence of protein L20. The polypeptide is Large ribosomal subunit protein bL21 (Sulfurovum sp. (strain NBC37-1)).